Reading from the N-terminus, the 269-residue chain is Shikimate dehydrogenase (NADP(+)) (269 aa).

Shikimate contacts are provided by residues 17–19 and Thr64; that span reads SKS. Lys68 acts as the Proton acceptor in catalysis. Position 80 (Glu80) interacts with NADP(+). Positions 89 and 105 each coordinate shikimate. NADP(+)-binding positions include 130-134, 154-159, and Met213; these read GAGGA and NRTHTK. Tyr215 is a binding site for shikimate. Gly237 serves as a coordination point for NADP(+).

Belongs to the shikimate dehydrogenase family. Homodimer.

It carries out the reaction shikimate + NADP(+) = 3-dehydroshikimate + NADPH + H(+). Its pathway is metabolic intermediate biosynthesis; chorismate biosynthesis; chorismate from D-erythrose 4-phosphate and phosphoenolpyruvate: step 4/7. Its function is as follows. Involved in the biosynthesis of the chorismate, which leads to the biosynthesis of aromatic amino acids. Catalyzes the reversible NADPH linked reduction of 3-dehydroshikimate (DHSA) to yield shikimate (SA). This chain is Shikimate dehydrogenase (NADP(+)), found in Neisseria mucosa.